A 1006-amino-acid chain; its full sequence is Cytosolic carboxypeptidase 3 (1006 aa).

In terms of domain architecture, Peptidase M14 spans 304 to 576 (YPYTYSNLQE…HFCDSLLDYC (273 aa)). Zn(2+) is bound by residues His368, Glu371, and His464. Glu540 functions as the Proton donor/acceptor in the catalytic mechanism. Positions 790–810 (ESHHQLKSKAKRCSSFQSKRT) are disordered.

This sequence belongs to the peptidase M14 family. Zn(2+) is required as a cofactor. As to expression, widely expressed. Expressed abundantly in tissues with m otile cilia such as testis, lung and trachea. Abundantly expressed in pituitary and kidney, moderately expressed in brain, eye, fat, pancreas, stomach, and adrenal.

The protein resides in the cytoplasm. It localises to the cytosol. The catalysed reaction is (L-glutamyl)(n+1)-gamma-L-glutamyl-L-glutamyl-[protein] + H2O = (L-glutamyl)(n)-gamma-L-glutamyl-L-glutamyl-[protein] + L-glutamate. Functionally, metallocarboxypeptidase that mediates deglutamylation of tubulin and non-tubulin target proteins. Catalyzes the removal of polyglutamate side chains present on the gamma-carboxyl group of glutamate residues within the C-terminal tail of tubulin protein. Specifically cleaves tubulin long-side-chains, while it is not able to remove the branching point glutamate. Also catalyzes the removal of polyglutamate residues from the carboxy-terminus of non-tubulin proteins such as MYLK. May catalyze the hydrolysis of aspartate from the carboxy-terminus of target proteins. Does not show detyrosinase or deglycylase activities from the carboxy-terminus of target proteins. This is Cytosolic carboxypeptidase 3 from Mus musculus (Mouse).